The chain runs to 893 residues: Alanine--tRNA ligase (893 aa).

The Zn(2+) site is built by H575, H579, C677, and H681.

Belongs to the class-II aminoacyl-tRNA synthetase family. Zn(2+) serves as cofactor.

It localises to the cytoplasm. It catalyses the reaction tRNA(Ala) + L-alanine + ATP = L-alanyl-tRNA(Ala) + AMP + diphosphate. Functionally, catalyzes the attachment of alanine to tRNA(Ala) in a two-step reaction: alanine is first activated by ATP to form Ala-AMP and then transferred to the acceptor end of tRNA(Ala). Also edits incorrectly charged Ser-tRNA(Ala) and Gly-tRNA(Ala) via its editing domain. The sequence is that of Alanine--tRNA ligase from Synechococcus sp. (strain CC9311).